Reading from the N-terminus, the 106-residue chain is uncharacterized protein (106 aa).

4 consecutive transmembrane segments (helical) span residues tryptophan 3–isoleucine 23, lysine 29–alanine 49, methionine 50–valine 70, and phenylalanine 82–leucine 102.

The protein belongs to the drug/metabolite transporter (DMT) superfamily. Small multidrug resistance (SMR) (TC 2.A.7.1) family.

Its subcellular location is the cell membrane. This is an uncharacterized protein from Bacillus subtilis (strain 168).